We begin with the raw amino-acid sequence, 906 residues long: Rho GTPase-activating protein gacJ (906 aa).

The tract at residues 53–117 is disordered; that stretch reads LEGHLNPSSH…RDNSRSDNIR (65 aa). Low complexity predominate over residues 69–79; it reads NNNNNNNNNNN. Over residues 92 to 117 the composition is skewed to basic and acidic residues; it reads SRSDSKHHNRENSKSDRDNSRSDNIR. Residues 161-348 enclose the Rho-GAP domain; it reads EELQSLYPDQ…YMLEYFNDIF (188 aa). 3 disordered regions span residues 368 to 415, 452 to 864, and 877 to 906; these read DTTS…SRSK, EIIP…SVLT, and ANQA…NINK. The segment covering 381-404 has biased composition (polar residues); it reads NGGSPRTSNTPYQQQHQLSSQSMA. The span at 461–487 shows a compositional bias: low complexity; that stretch reads TTTTTTTTTNTTTTTTTTNTTPNNTTT. 2 stretches are compositionally biased toward pro residues: residues 494–510 and 547–560; these read PVPP…PPNP and QPPP…PSPP. Positions 565 to 574 are enriched in polar residues; it reads KPTSKSDFIP. 2 stretches are compositionally biased toward low complexity: residues 575-597 and 613-629; these read STNN…SIPK and IEEP…TTTT. Positions 637-649 are enriched in polar residues; that stretch reads FKNNGTISSGSKS. Composition is skewed to low complexity over residues 650 to 663 and 683 to 694; these read NPNL…NQPL and SKPITTTPTIKK. Residues 708-721 show a composition bias toward pro residues; the sequence is PPSPSSSSPSPPHN. Composition is skewed to low complexity over residues 754-772, 785-816, and 844-861; these read PTIP…PTTP, PPIN…STPK, and SSPT…SSPS. The span at 880 to 890 shows a compositional bias: polar residues; sequence AKKNPLSNSGG.

It localises to the cytoplasm. In terms of biological role, rho GTPase-activating protein involved in the signal transduction pathway. This is Rho GTPase-activating protein gacJ (gacJ) from Dictyostelium discoideum (Social amoeba).